Consider the following 55-residue polypeptide: Large ribosomal subunit protein bL33B (55 aa).

Belongs to the bacterial ribosomal protein bL33 family.

The sequence is that of Large ribosomal subunit protein bL33B from Mycobacteroides abscessus (strain ATCC 19977 / DSM 44196 / CCUG 20993 / CIP 104536 / JCM 13569 / NCTC 13031 / TMC 1543 / L948) (Mycobacterium abscessus).